Reading from the N-terminus, the 357-residue chain is H-2 class I histocompatibility antigen, D-37 alpha chain (357 aa).

The first 20 residues, 1 to 20 (MLLFAHLLQLLVSATVPTQS), serve as a signal peptide directing secretion. The tract at residues 21–110 (SPHSLRYFTT…LLGYYNQSND (90 aa)) is alpha-1. The Extracellular segment spans residues 21-304 (SPHSLRYFTT…EPPPSTVSNM (284 aa)). Asn-106 carries an N-linked (GlcNAc...) asparagine glycan. The alpha-2 stretch occupies residues 111–202 (ESHTLQWMYG…RLGNETLQRS (92 aa)). A disulfide bridge connects residues Cys-121 and Cys-184. A glycan (N-linked (GlcNAc...) asparagine) is linked at Asn-196. Residues 203 to 294 (DPPKAHVTHH…GLPEPLTLRW (92 aa)) are alpha-3. The 89-residue stretch at 205-293 (PKAHVTHHPR…EGLPEPLTLR (89 aa)) folds into the Ig-like C1-type domain. Residues Cys-223 and Cys-279 are joined by a disulfide bond. The connecting peptide stretch occupies residues 295-304 (EPPPSTVSNM). The chain crosses the membrane as a helical span at residues 305–327 (VIIAVLVVLGAVIILGAVVAFVM). Topologically, residues 328-357 (KRRRHIGVKGCYAHVLGSKSFQTSDWPQKA) are cytoplasmic. Phosphoserine is present on Ser-347.

Belongs to the MHC class I family. As to quaternary structure, heterodimer of an alpha chain and a beta chain (beta-2-microglobulin).

Its subcellular location is the membrane. In terms of biological role, involved in the presentation of foreign antigens to the immune system. The polypeptide is H-2 class I histocompatibility antigen, D-37 alpha chain (H2-T23) (Mus musculus (Mouse)).